The primary structure comprises 376 residues: MKVLTVFGTRPEAIKMAPLVHALEKDPHFEAKVCVTAQHREMLDQVLTLFSIVPDYDLNIMQPGQGLTEITCRILEGLKPILADFKPDVVLVHGDTTTTIATSLAAFYQRIPVGHVEAGLRTGDLYSPWPEEANRTLTGHLAMYHFAPTENSRQNLLRENIPDERIFVTGNTVIDALIWVRDRVLTSDTLQAELAEQYPFLNANKKMILVTGHRRESFGQGFEHICQALAEIAAANQNVQIVYPVHLNPNVSEPVNRILGHVENVVLIEPQDYLPFVWLMNHAWLILTDSGGIQEEAPSLGKPVLVMRETTERPEAITAGTVRLIGTDSRRIVAEVMRLLHDENEYQTMSRAHNPYGDGQSCARILQALKSYRVSL.

Substrate is bound by residues arginine 10, lysine 15, aspartate 95, glutamate 117, histidine 213, glutamine 271, phenylalanine 276, 290 to 292, glutamate 296, and arginine 313; that span reads SGG.

It belongs to the UDP-N-acetylglucosamine 2-epimerase family. In terms of assembly, homodimer.

The protein localises to the cytoplasm. It carries out the reaction UDP-N-acetyl-alpha-D-glucosamine = UDP-N-acetyl-alpha-D-mannosamine. The protein operates within bacterial outer membrane biogenesis; enterobacterial common antigen biosynthesis. Catalyzes the reversible epimerization at C-2 of UDP-N-acetylglucosamine (UDP-GlcNAc) and thereby provides bacteria with UDP-N-acetylmannosamine (UDP-ManNAc), the activated donor of ManNAc residues. The chain is UDP-N-acetylglucosamine 2-epimerase from Salmonella typhimurium (strain LT2 / SGSC1412 / ATCC 700720).